Consider the following 290-residue polypeptide: uncharacterized protein (290 aa).

In terms of domain architecture, ABC transporter spans 2–238 (LKTENLSVGY…EIVNELYDLK (237 aa)). 34–41 (GPNGAGKS) serves as a coordination point for ATP.

It belongs to the ABC transporter superfamily.

This is an uncharacterized protein from Methanocaldococcus jannaschii (strain ATCC 43067 / DSM 2661 / JAL-1 / JCM 10045 / NBRC 100440) (Methanococcus jannaschii).